Reading from the N-terminus, the 877-residue chain is ATP-dependent RNA helicase dbp7 (877 aa).

Disordered stretches follow at residues 34-163 (AKKT…LPPG) and 225-251 (FNPT…APLT). The segment covering 50–73 (STREIFSERQHDTGAEEYIGREPS) has biased composition (basic and acidic residues). The short motif at 255 to 284 (ATFTNLGLSRRLAAHLSTKLDMKAPTAIQK) is the Q motif element. In terms of domain architecture, Helicase ATP-binding spans 288-484 (TQLISDDSDA…EISLKDAVHI (197 aa)). 301–308 (AETGSGKT) lines the ATP pocket. The short motif at 417–420 (DEGD) is the DEAD box element. The Helicase C-terminal domain maps to 512–719 (QLKQSYAIVP…LTHHTAEDLI (208 aa)). The disordered stretch occupies residues 803–851 (PGLRPAKMTKADRSVAARKAKRGEKEEEKAPEGERVRKQRKMELDLPTV). The segment covering 825-846 (GEKEEEKAPEGERVRKQRKMEL) has biased composition (basic and acidic residues).

It belongs to the DEAD box helicase family. DDX31/DBP7 subfamily.

Its subcellular location is the nucleus. It is found in the nucleolus. The catalysed reaction is ATP + H2O = ADP + phosphate + H(+). Its function is as follows. ATP-binding RNA helicase involved in the biogenesis of 60S ribosomal subunits and is required for the normal formation of 25S and 5.8S rRNAs. In Sclerotinia sclerotiorum (strain ATCC 18683 / 1980 / Ss-1) (White mold), this protein is ATP-dependent RNA helicase dbp7 (dbp7).